The sequence spans 325 residues: MLTRFKKQNNKMVRANIVSMVLLMHAIVGFPFHARGLSMTYYMMSCPFAEQIVKNSVNNALQADPTLAAGLIRMLFHDCFIEGCDASILLDSTKDNTAEKDSPANLSLRGYEIIDDAKEKIENRCPGVVSCADIVAMAARDAVFWAGGPYYDIPKGRFDGKRSKIEDTRNLPSPFLNASQLIQTFGQRGFTPQDVVALSGAHTLGVARCSSFKARLTVPDSSLDSTFANTLSKTCSAGDNAEQPFDATRNDFDNAYFNALQMKSGVLFSDQTLFNTPRTRNLVNGYALNQAKFFFDFQQAMRKMSNLDVKLGSQGEVRQNCRSIN.

The N-terminal stretch at 1 to 36 (MLTRFKKQNNKMVRANIVSMVLLMHAIVGFPFHARG) is a signal peptide. Cystine bridges form between Cys46–Cys125, Cys79–Cys84, Cys131–Cys321, and Cys209–Cys235. Residue His77 is the Proton acceptor of the active site. Residues Asp78, Gly83, Asp85, and Ser87 each contribute to the Ca(2+) site. Residue Pro172 participates in substrate binding. An N-linked (GlcNAc...) asparagine glycan is attached at Asn177. His202 is a binding site for heme b. Ca(2+) is bound at residue Thr203. 3 residues coordinate Ca(2+): Asp246, Thr248, and Asp253.

Belongs to the peroxidase family. Classical plant (class III) peroxidase subfamily. Heme b is required as a cofactor. Ca(2+) serves as cofactor.

It is found in the secreted. It catalyses the reaction 2 a phenolic donor + H2O2 = 2 a phenolic radical donor + 2 H2O. Removal of H(2)O(2), oxidation of toxic reductants, biosynthesis and degradation of lignin, suberization, auxin catabolism, response to environmental stresses such as wounding, pathogen attack and oxidative stress. These functions might be dependent on each isozyme/isoform in each plant tissue. The chain is Peroxidase 47 (PER47) from Arabidopsis thaliana (Mouse-ear cress).